Consider the following 211-residue polypeptide: Ras-related protein RABB1b (211 aa).

GTP is bound at residue 13-20; that stretch reads GDTGVGKS. The short motif at 35-43 is the Effector region element; sequence HDLTIGVEF. GTP contacts are provided by residues 61–65, 119–122, and 149–150; these read DTAGQ, NKCD, and SA. Residues C209 and C210 are each lipidated (S-geranylgeranyl cysteine).

It belongs to the small GTPase superfamily. Rab family.

The protein resides in the cell membrane. Intracellular vesicle trafficking and protein transport. This is Ras-related protein RABB1b (RABB1B) from Arabidopsis thaliana (Mouse-ear cress).